Here is a 228-residue protein sequence, read N- to C-terminus: Cytidylate kinase (228 aa).

Residue 10–18 coordinates ATP; it reads GPSGSGKGT.

This sequence belongs to the cytidylate kinase family. Type 1 subfamily.

It is found in the cytoplasm. It carries out the reaction CMP + ATP = CDP + ADP. The enzyme catalyses dCMP + ATP = dCDP + ADP. The chain is Cytidylate kinase from Acinetobacter baumannii (strain SDF).